The chain runs to 108 residues: Large ribosomal subunit protein P1 (108 aa).

The interval 67 to 108 (PAAAPAEAGGEEKKEEEKKEEEEKEEEVSEEEALAGLSALFG) is disordered. Positions 84 to 99 (KKEEEEKEEEVSEEEA) are enriched in acidic residues.

This sequence belongs to the eukaryotic ribosomal protein P1/P2 family. In terms of assembly, part of the 50S ribosomal subunit. Homodimer, it forms part of the ribosomal stalk which helps the ribosome interact with GTP-bound translation factors. Forms a heptameric uL10/P0(P1)2(P1)2(P1)2 complex, where uL10/P0 forms an elongated spine to which the P1 dimers bind in a sequential fashion.

In terms of biological role, forms part of the ribosomal stalk, playing a central role in the interaction of the ribosome with GTP-bound translation factors. The stalk complex of P.horikoshii binds to E.coli large subunits and confers on them the ability to interact with eukaryotic elongation factors. Each succesive P1 dimer bound along the P0 spine increases the GTPase activity of elongation factors and increases translation by reconsituted ribosomes. The chain is Large ribosomal subunit protein P1 from Pyrococcus horikoshii (strain ATCC 700860 / DSM 12428 / JCM 9974 / NBRC 100139 / OT-3).